Reading from the N-terminus, the 349-residue chain is 3-dehydroquinate synthase (349 aa).

NAD(+)-binding positions include 63–68 (DGEEYK), 97–101 (GVIGD), 121–122 (TT), Lys134, Lys143, and 161–164 (FLTT). 3 residues coordinate Zn(2+): Glu176, His235, and His252.

It belongs to the sugar phosphate cyclases superfamily. Dehydroquinate synthase family. The cofactor is Co(2+). Zn(2+) is required as a cofactor. It depends on NAD(+) as a cofactor.

It localises to the cytoplasm. The catalysed reaction is 7-phospho-2-dehydro-3-deoxy-D-arabino-heptonate = 3-dehydroquinate + phosphate. It participates in metabolic intermediate biosynthesis; chorismate biosynthesis; chorismate from D-erythrose 4-phosphate and phosphoenolpyruvate: step 2/7. Its function is as follows. Catalyzes the conversion of 3-deoxy-D-arabino-heptulosonate 7-phosphate (DAHP) to dehydroquinate (DHQ). This chain is 3-dehydroquinate synthase, found in Sulfurimonas denitrificans (strain ATCC 33889 / DSM 1251) (Thiomicrospira denitrificans (strain ATCC 33889 / DSM 1251)).